The chain runs to 133 residues: Small ribosomal subunit protein uS8 (133 aa).

Belongs to the universal ribosomal protein uS8 family. As to quaternary structure, part of the 30S ribosomal subunit. Contacts proteins S5 and S12.

One of the primary rRNA binding proteins, it binds directly to 16S rRNA central domain where it helps coordinate assembly of the platform of the 30S subunit. In Chlorobaculum parvum (strain DSM 263 / NCIMB 8327) (Chlorobium vibrioforme subsp. thiosulfatophilum), this protein is Small ribosomal subunit protein uS8.